The chain runs to 154 residues: Small ribosomal subunit protein uS7 (154 aa).

The protein belongs to the universal ribosomal protein uS7 family. As to quaternary structure, part of the 30S ribosomal subunit. Contacts proteins S9 and S11.

Its function is as follows. One of the primary rRNA binding proteins, it binds directly to 16S rRNA where it nucleates assembly of the head domain of the 30S subunit. Is located at the subunit interface close to the decoding center, probably blocks exit of the E-site tRNA. This chain is Small ribosomal subunit protein uS7, found in Karelsulcia muelleri (strain GWSS) (Sulcia muelleri).